A 96-amino-acid polypeptide reads, in one-letter code: Co-chaperonin GroES (96 aa).

The disordered stretch occupies residues 26–48 (LLPGSAQEKPSQGEVLATGNGQI).

Belongs to the GroES chaperonin family. Heptamer of 7 subunits arranged in a ring. Interacts with the chaperonin GroEL.

The protein resides in the cytoplasm. Together with the chaperonin GroEL, plays an essential role in assisting protein folding. The GroEL-GroES system forms a nano-cage that allows encapsulation of the non-native substrate proteins and provides a physical environment optimized to promote and accelerate protein folding. GroES binds to the apical surface of the GroEL ring, thereby capping the opening of the GroEL channel. This chain is Co-chaperonin GroES, found in Psychrobacter arcticus (strain DSM 17307 / VKM B-2377 / 273-4).